Reading from the N-terminus, the 455-residue chain is Probable glycine dehydrogenase (decarboxylating) subunit 1 (455 aa).

The protein belongs to the GcvP family. N-terminal subunit subfamily. In terms of assembly, the glycine cleavage system is composed of four proteins: P, T, L and H. In this organism, the P 'protein' is a heterodimer of two subunits.

It carries out the reaction N(6)-[(R)-lipoyl]-L-lysyl-[glycine-cleavage complex H protein] + glycine + H(+) = N(6)-[(R)-S(8)-aminomethyldihydrolipoyl]-L-lysyl-[glycine-cleavage complex H protein] + CO2. The glycine cleavage system catalyzes the degradation of glycine. The P protein binds the alpha-amino group of glycine through its pyridoxal phosphate cofactor; CO(2) is released and the remaining methylamine moiety is then transferred to the lipoamide cofactor of the H protein. The protein is Probable glycine dehydrogenase (decarboxylating) subunit 1 of Saccharolobus islandicus (strain Y.N.15.51 / Yellowstone #2) (Sulfolobus islandicus).